Reading from the N-terminus, the 320-residue chain is G-protein coupled receptor homolog FPV021 (320 aa).

The Extracellular segment spans residues methionine 1–threonine 18. The helical transmembrane segment at leucine 19–isoleucine 39 threads the bilayer. Residues tryptophan 40–threonine 52 lie on the Cytoplasmic side of the membrane. Residues isoleucine 53–isoleucine 73 form a helical membrane-spanning segment. The Extracellular segment spans residues threonine 74–isoleucine 91. Cysteine 89 and cysteine 167 are joined by a disulfide. Residues glycine 92 to isoleucine 112 form a helical membrane-spanning segment. Residues aspartate 113–isoleucine 133 are Cytoplasmic-facing. The helical transmembrane segment at methionine 134–phenylalanine 154 threads the bilayer. Residues lysine 155–serine 188 are Extracellular-facing. A glycan (N-linked (GlcNAc...) asparagine; by host) is linked at asparagine 175. The chain crosses the membrane as a helical span at residues leucine 189–phenylalanine 209. The Cytoplasmic portion of the chain corresponds to lysine 210–threonine 222. The helical transmembrane segment at isoleucine 223–isoleucine 243 threads the bilayer. At aspartate 244–alanine 260 the chain is on the extracellular side. The helical transmembrane segment at proline 261–valine 281 threads the bilayer. The Cytoplasmic portion of the chain corresponds to glycine 282–asparagine 320.

It belongs to the G-protein coupled receptor 1 family.

The protein resides in the host cell membrane. The chain is G-protein coupled receptor homolog FPV021 from Vertebrata (FPV).